Reading from the N-terminus, the 337-residue chain is Holliday junction branch migration complex subunit RuvB (337 aa).

The tract at residues 4-186 (ADRLIAADNP…FGIVQRLEYY (183 aa)) is large ATPase domain (RuvB-L). ATP is bound by residues isoleucine 25, arginine 26, glycine 67, lysine 70, threonine 71, threonine 72, 133–135 (EDY), arginine 176, tyrosine 186, and arginine 223. Threonine 71 contacts Mg(2+). Positions 187–257 (KVEDLQHIVQ…IADKALNMLD (71 aa)) are small ATPAse domain (RuvB-S). The head domain (RuvB-H) stretch occupies residues 260–337 (VRGFDYMDRK…LHFGIDKPDK (78 aa)). 3 residues coordinate DNA: arginine 296, arginine 315, and arginine 320.

It belongs to the RuvB family. As to quaternary structure, homohexamer. Forms an RuvA(8)-RuvB(12)-Holliday junction (HJ) complex. HJ DNA is sandwiched between 2 RuvA tetramers; dsDNA enters through RuvA and exits via RuvB. An RuvB hexamer assembles on each DNA strand where it exits the tetramer. Each RuvB hexamer is contacted by two RuvA subunits (via domain III) on 2 adjacent RuvB subunits; this complex drives branch migration. In the full resolvosome a probable DNA-RuvA(4)-RuvB(12)-RuvC(2) complex forms which resolves the HJ.

Its subcellular location is the cytoplasm. It carries out the reaction ATP + H2O = ADP + phosphate + H(+). In terms of biological role, the RuvA-RuvB-RuvC complex processes Holliday junction (HJ) DNA during genetic recombination and DNA repair, while the RuvA-RuvB complex plays an important role in the rescue of blocked DNA replication forks via replication fork reversal (RFR). RuvA specifically binds to HJ cruciform DNA, conferring on it an open structure. The RuvB hexamer acts as an ATP-dependent pump, pulling dsDNA into and through the RuvAB complex. RuvB forms 2 homohexamers on either side of HJ DNA bound by 1 or 2 RuvA tetramers; 4 subunits per hexamer contact DNA at a time. Coordinated motions by a converter formed by DNA-disengaged RuvB subunits stimulates ATP hydrolysis and nucleotide exchange. Immobilization of the converter enables RuvB to convert the ATP-contained energy into a lever motion, pulling 2 nucleotides of DNA out of the RuvA tetramer per ATP hydrolyzed, thus driving DNA branch migration. The RuvB motors rotate together with the DNA substrate, which together with the progressing nucleotide cycle form the mechanistic basis for DNA recombination by continuous HJ branch migration. Branch migration allows RuvC to scan DNA until it finds its consensus sequence, where it cleaves and resolves cruciform DNA. This is Holliday junction branch migration complex subunit RuvB from Aliivibrio fischeri (strain ATCC 700601 / ES114) (Vibrio fischeri).